The primary structure comprises 215 residues: 3,4-dihydroxy-2-butanone 4-phosphate synthase (215 aa).

Residues 38–39 (RE), aspartate 43, 151–155 (RRGHT), and glutamate 175 contribute to the D-ribulose 5-phosphate site. Residue glutamate 39 participates in Mg(2+) binding. Histidine 154 contacts Mg(2+).

The protein belongs to the DHBP synthase family. As to quaternary structure, homodimer. It depends on Mg(2+) as a cofactor. Requires Mn(2+) as cofactor.

The enzyme catalyses D-ribulose 5-phosphate = (2S)-2-hydroxy-3-oxobutyl phosphate + formate + H(+). It participates in cofactor biosynthesis; riboflavin biosynthesis; 2-hydroxy-3-oxobutyl phosphate from D-ribulose 5-phosphate: step 1/1. In terms of biological role, catalyzes the conversion of D-ribulose 5-phosphate to formate and 3,4-dihydroxy-2-butanone 4-phosphate. This Haemophilus influenzae (strain PittEE) protein is 3,4-dihydroxy-2-butanone 4-phosphate synthase.